The primary structure comprises 394 residues: Tubulin-like protein CetZ5 (394 aa).

GTP is bound by residues 10-14 (QAGGN), 110-112 (GTG), Glu-142, Asn-169, and Asn-187.

It belongs to the CetZ family.

The protein resides in the cytoplasm. Involved in cell shape control. This is Tubulin-like protein CetZ5 from Haloferax volcanii (strain ATCC 29605 / DSM 3757 / JCM 8879 / NBRC 14742 / NCIMB 2012 / VKM B-1768 / DS2) (Halobacterium volcanii).